Consider the following 95-residue polypeptide: Integration host factor subunit beta (95 aa).

The tract at residues 57 to 76 (APRTGRNPKTGDKVDLEGKY) is disordered. The segment covering 65 to 76 (KTGDKVDLEGKY) has biased composition (basic and acidic residues).

It belongs to the bacterial histone-like protein family. As to quaternary structure, heterodimer of an alpha and a beta chain.

Functionally, this protein is one of the two subunits of integration host factor, a specific DNA-binding protein that functions in genetic recombination as well as in transcriptional and translational control. The polypeptide is Integration host factor subunit beta (Enterobacter sp. (strain 638)).